The primary structure comprises 428 residues: Transcription factor bHLH91 (428 aa).

Positions 210 to 259 constitute a bHLH domain; the sequence is KRKNKPFTTERERRCHLNERYEALKLLIPSPSKGDRASILQDGIDYINEL. The interval 278 to 320 is disordered; sequence RHKNNEVDDNNNNKNLDDHGNEDDDDDDENMEKKPESDVIDQC. Acidic residues predominate over residues 297–307; sequence GNEDDDDDDEN.

As to quaternary structure, homodimer. In terms of tissue distribution, flowers.

The protein resides in the nucleus. This chain is Transcription factor bHLH91 (BHLH91), found in Arabidopsis thaliana (Mouse-ear cress).